Consider the following 245-residue polypeptide: 5'-nucleotidase SurE (245 aa).

Residues Asp-8, Asp-9, Ser-39, and Asn-91 each contribute to the a divalent metal cation site.

It belongs to the SurE nucleotidase family. The cofactor is a divalent metal cation.

The protein localises to the cytoplasm. The enzyme catalyses a ribonucleoside 5'-phosphate + H2O = a ribonucleoside + phosphate. In terms of biological role, nucleotidase that shows phosphatase activity on nucleoside 5'-monophosphates. The polypeptide is 5'-nucleotidase SurE (Janthinobacterium sp. (strain Marseille) (Minibacterium massiliensis)).